A 348-amino-acid chain; its full sequence is Guanosine ABC transporter permease protein NupP (348 aa).

9 consecutive transmembrane segments (helical) span residues 8–28, 61–81, 85–105, 107–127, 136–156, 189–209, 237–257, 277–297, and 320–340; these read LLVP…IMLV, YILS…NIGV, LLVG…PAYI, LPLA…IPGI, EVIV…YIIS, LHLG…IINK, IMTS…MEGL, IAVA…ACLL, and IVIA…FVMG.

This sequence belongs to the binding-protein-dependent transport system permease family. The complex is composed of two ATP-binding proteins (NupO), two transmembrane proteins (NupP and NupQ) and a solute-binding protein (NupN).

The protein resides in the cell membrane. Its function is as follows. Part of an ABC transporter complex involved in the uptake of guanosine. Responsible for the translocation of the substrate across the membrane. May be a nucleoside transporter of broad specificity but with various affinities for different substrates. The chain is Guanosine ABC transporter permease protein NupP from Bacillus subtilis (strain 168).